The chain runs to 488 residues: Inosine-5'-monophosphate dehydrogenase (488 aa).

2 consecutive CBS domains span residues 95 to 153 (VITN…SIKI) and 157 to 213 (MTKE…PHAA). NAD(+)-binding positions include D250 and 300–302 (GIG). K(+)-binding residues include G302 and G304. S305 serves as a coordination point for IMP. C307 serves as a coordination point for K(+). The active-site Thioimidate intermediate is the C307. Residues 340–342 (DGG), 363–364 (GS), and 387–391 (YRGMG) contribute to the IMP site. R403 (proton acceptor) is an active-site residue. E417 lines the IMP pocket. Residues 467 to 488 (AGLAESHPHNVQITKESPNYSF) are disordered. E471, S472, and H473 together coordinate K(+). The span at 475-488 (HNVQITKESPNYSF) shows a compositional bias: polar residues.

The protein belongs to the IMPDH/GMPR family. As to quaternary structure, homotetramer. It depends on K(+) as a cofactor.

The enzyme catalyses IMP + NAD(+) + H2O = XMP + NADH + H(+). The protein operates within purine metabolism; XMP biosynthesis via de novo pathway; XMP from IMP: step 1/1. With respect to regulation, mycophenolic acid (MPA) is a non-competitive inhibitor that prevents formation of the closed enzyme conformation by binding to the same site as the amobile flap. In contrast, mizoribine monophosphate (MZP) is a competitive inhibitor that induces the closed conformation. MPA is a potent inhibitor of mammalian IMPDHs but a poor inhibitor of the bacterial enzymes. MZP is a more potent inhibitor of bacterial IMPDH. Its function is as follows. Catalyzes the conversion of inosine 5'-phosphate (IMP) to xanthosine 5'-phosphate (XMP), the first committed and rate-limiting step in the de novo synthesis of guanine nucleotides, and therefore plays an important role in the regulation of cell growth. This chain is Inosine-5'-monophosphate dehydrogenase, found in Staphylococcus haemolyticus (strain JCSC1435).